The sequence spans 418 residues: Delta(14)-sterol reductase TM7SF2 (418 aa).

Transmembrane regions (helical) follow at residues 13–35 (FGGPLGAAALMLLLPVTMFHLLL), 62–81 (ALLLCLTWLGLQAALYLLPA), 102–124 (GFQALVLTALLVGLGVSAGLPLS), 129–148 (MLLPLAFAATLTAFIFSLLL), 255–277 (FGFMLAFGDLAWVPFTYSLQAQF), and 287–304 (WPLASFICLINAVGYYIF). NADP(+)-binding positions include Lys-311, Arg-315, Leu-338, Trp-343, and 350–351 (NY). The helical transmembrane segment at 355 to 377 (LIMALAWSLPCGVFHLLPYFYFL) threads the bilayer. NADP(+) contacts are provided by residues Asp-390, 394 to 398 (CRQKY), and Tyr-405.

Belongs to the ERG4/ERG24 family. As to expression, highly expressed in liver and brain.

The protein resides in the microsome membrane. It is found in the endoplasmic reticulum membrane. The catalysed reaction is 4,4-dimethyl-5alpha-cholesta-8,24-dien-3beta-ol + NADP(+) = 4,4-dimethyl-5alpha-cholesta-8,14,24-trien-3beta-ol + NADPH + H(+). It catalyses the reaction 5alpha-cholest-8,14-dien-3beta-ol + NADPH + H(+) = 5alpha-cholest-8-en-3beta-ol + NADP(+). The enzyme catalyses 4,4-dimethyl-8,14-cholestadien-3beta-ol + NADPH + H(+) = 4,4-dimethyl-5alpha-cholest-8-en-3beta-ol + NADP(+). The protein operates within steroid biosynthesis; cholesterol biosynthesis. Catalyzes the reduction of the C14-unsaturated bond of lanosterol, as part of the metabolic pathway leading to cholesterol biosynthesis. This is Delta(14)-sterol reductase TM7SF2 (TM7SF2) from Bos taurus (Bovine).